Reading from the N-terminus, the 135-residue chain is MKRLGVFLILASIVCGVVAICGCTGGGGTDYSSSTASAETETCPVQILEHHLVRKDYGTVYVEGVAQNVGNKRLKFVEIKARFYDADGVLIDEFMDVHRDVDPGQKFRFKIIGPIGEEGKKVAKYDIAVGTWWTE.

The chain crosses the membrane as a helical span at residues 4 to 24; that stretch reads LGVFLILASIVCGVVAICGCT.

The protein resides in the membrane. This is an uncharacterized protein from Methanocaldococcus jannaschii (strain ATCC 43067 / DSM 2661 / JAL-1 / JCM 10045 / NBRC 100440) (Methanococcus jannaschii).